The chain runs to 881 residues: DNA mismatch repair protein MutS (881 aa).

632–639 (GPNMGGKS) is an ATP binding site.

This sequence belongs to the DNA mismatch repair MutS family.

Functionally, this protein is involved in the repair of mismatches in DNA. It is possible that it carries out the mismatch recognition step. This protein has a weak ATPase activity. The polypeptide is DNA mismatch repair protein MutS (Chelativorans sp. (strain BNC1)).